The chain runs to 307 residues: tRNA pseudouridine synthase B (307 aa).

D38 functions as the Nucleophile in the catalytic mechanism.

Belongs to the pseudouridine synthase TruB family. Type 1 subfamily.

It catalyses the reaction uridine(55) in tRNA = pseudouridine(55) in tRNA. Functionally, responsible for synthesis of pseudouridine from uracil-55 in the psi GC loop of transfer RNAs. This is tRNA pseudouridine synthase B from Lachnoclostridium phytofermentans (strain ATCC 700394 / DSM 18823 / ISDg) (Clostridium phytofermentans).